A 155-amino-acid polypeptide reads, in one-letter code: Small ribosomal subunit protein uS7 (155 aa).

It belongs to the universal ribosomal protein uS7 family. Part of the 30S ribosomal subunit. Contacts proteins S9 and S11.

One of the primary rRNA binding proteins, it binds directly to 16S rRNA where it nucleates assembly of the head domain of the 30S subunit. Is located at the subunit interface close to the decoding center, probably blocks exit of the E-site tRNA. This Halorhodospira halophila (strain DSM 244 / SL1) (Ectothiorhodospira halophila (strain DSM 244 / SL1)) protein is Small ribosomal subunit protein uS7.